The sequence spans 277 residues: Large ribosomal subunit protein uL2 (277 aa).

The disordered stretch occupies residues 215 to 263; that stretch reads LGRKPHQRGSAMNPVDHPHGGGEGRTGAGRVPVSPWGQPAKGLKTRKKR.

The protein belongs to the universal ribosomal protein uL2 family. In terms of assembly, part of the 50S ribosomal subunit. Forms a bridge to the 30S subunit in the 70S ribosome.

In terms of biological role, one of the primary rRNA binding proteins. Required for association of the 30S and 50S subunits to form the 70S ribosome, for tRNA binding and peptide bond formation. It has been suggested to have peptidyltransferase activity; this is somewhat controversial. Makes several contacts with the 16S rRNA in the 70S ribosome. This chain is Large ribosomal subunit protein uL2, found in Deinococcus geothermalis (strain DSM 11300 / CIP 105573 / AG-3a).